We begin with the raw amino-acid sequence, 337 residues long: Glyceraldehyde-3-phosphate dehydrogenase (337 aa).

NAD(+) contacts are provided by residues Arg-12 to Ile-13, Asp-34, Arg-78, and Thr-121. D-glyceraldehyde 3-phosphate contacts are provided by residues Ser-151–Thr-153, Thr-182, Arg-199, Ser-212–Gly-213, and Arg-235. The Nucleophile role is filled by Cys-152. Residue Asn-317 participates in NAD(+) binding.

Belongs to the glyceraldehyde-3-phosphate dehydrogenase family. As to quaternary structure, homotetramer.

The protein resides in the cytoplasm. It catalyses the reaction D-glyceraldehyde 3-phosphate + phosphate + NAD(+) = (2R)-3-phospho-glyceroyl phosphate + NADH + H(+). Its pathway is carbohydrate degradation; glycolysis; pyruvate from D-glyceraldehyde 3-phosphate: step 1/5. Its function is as follows. Catalyzes the oxidative phosphorylation of glyceraldehyde 3-phosphate (G3P) to 1,3-bisphosphoglycerate (BPG) using the cofactor NAD. The first reaction step involves the formation of a hemiacetal intermediate between G3P and a cysteine residue, and this hemiacetal intermediate is then oxidized to a thioester, with concomitant reduction of NAD to NADH. The reduced NADH is then exchanged with the second NAD, and the thioester is attacked by a nucleophilic inorganic phosphate to produce BPG. This Lactococcus lactis subsp. lactis (strain IL1403) (Streptococcus lactis) protein is Glyceraldehyde-3-phosphate dehydrogenase (gap).